A 353-amino-acid polypeptide reads, in one-letter code: Stomatin-like protein 2, mitochondrial (353 aa).

Residues 1–28 (MLARAARGTGALLLRGSVQASGRIPRRA) constitute a mitochondrion transit peptide. Phosphoserine; by PKC/PRKCZ is present on S17. Position 124 is a phosphotyrosine (Y124). An N6-acetyllysine; alternate modification is found at K145. K145 is subject to N6-succinyllysine; alternate. The stretch at 215–252 (INVAEGKKQAQILASEAEKAEQINQAAGEASAVLAKAK) forms a coiled coil. K233 is subject to N6-acetyllysine. The interval 324–353 (VPGAQNSSEARRDVQTTDTSIEELGRVKLS) is disordered. At S330 the chain carries Phosphoserine.

This sequence belongs to the band 7/mec-2 family. In terms of assembly, forms homooligomers. Interacts with MFN2; may form heterooligomers. Interacts with PHB1 and PHB2; recruits them to cardiolipin-enriched mitochondrial membranes and stabilizes them. Interacts with CACNA2D2.

It localises to the cell membrane. It is found in the mitochondrion. The protein resides in the mitochondrion inner membrane. Its subcellular location is the mitochondrion intermembrane space. The protein localises to the membrane raft. It localises to the cytoplasm. It is found in the cytoskeleton. Mitochondrial protein that probably regulates the biogenesis and the activity of mitochondria. Stimulates cardiolipin biosynthesis, binds cardiolipin-enriched membranes where it recruits and stabilizes some proteins including prohibitin and may therefore act in the organization of functional microdomains in mitochondrial membranes. Through regulation of the mitochondrial function may play a role into several biological processes including cell migration, cell proliferation, T-cell activation, calcium homeostasis and cellular response to stress. May play a role in calcium homeostasis through negative regulation of calcium efflux from mitochondria. Required for mitochondrial hyperfusion a pro-survival cellular response to stress which results in increased ATP production by mitochondria. May also regulate the organization of functional domains at the plasma membrane and play a role in T-cell activation through association with the T-cell receptor signaling complex and its regulation. The sequence is that of Stomatin-like protein 2, mitochondrial (Stoml2) from Rattus norvegicus (Rat).